The chain runs to 165 residues: Endoribonuclease YbeY (165 aa).

Zn(2+) is bound by residues His130, His134, and His140.

It belongs to the endoribonuclease YbeY family. Requires Zn(2+) as cofactor.

Its subcellular location is the cytoplasm. Functionally, single strand-specific metallo-endoribonuclease involved in late-stage 70S ribosome quality control and in maturation of the 3' terminus of the 16S rRNA. The protein is Endoribonuclease YbeY of Streptococcus agalactiae serotype Ia (strain ATCC 27591 / A909 / CDC SS700).